The primary structure comprises 541 residues: Apolipoprotein N-acyltransferase (541 aa).

6 helical membrane passes run 21-41 (MSWFFSLLGSAVGYGLLWYSL), 54-74 (LTSLLFLWSVTVYGVHFSWML), 89-109 (VLISLLALLFTAFSCLLFFIV), 116-136 (ILWCLPGLWVAVEMVRFYFLC), 157-177 (FGGFFGWAGESFILVATGISF), and 189-209 (YVWLGCLLFPYILGGVHYEYL). The region spanning 219–500 (LRVAVIQPAS…PGVLQVSLPM (282 aa)) is the CN hydrolase domain. Glu-265 functions as the Proton acceptor in the catalytic mechanism. The active site involves Lys-350. Catalysis depends on Cys-405, which acts as the Nucleophile. A helical membrane pass occupies residues 506–526 (LYAFWGDFPMIFLSLLSIGCI).

This sequence belongs to the CN hydrolase family. Apolipoprotein N-acyltransferase subfamily.

The protein localises to the cell inner membrane. It catalyses the reaction N-terminal S-1,2-diacyl-sn-glyceryl-L-cysteinyl-[lipoprotein] + a glycerophospholipid = N-acyl-S-1,2-diacyl-sn-glyceryl-L-cysteinyl-[lipoprotein] + a 2-acyl-sn-glycero-3-phospholipid + H(+). Its pathway is protein modification; lipoprotein biosynthesis (N-acyl transfer). Functionally, catalyzes the phospholipid dependent N-acylation of the N-terminal cysteine of apolipoprotein, the last step in lipoprotein maturation. This chain is Apolipoprotein N-acyltransferase, found in Chlamydia caviae (strain ATCC VR-813 / DSM 19441 / 03DC25 / GPIC) (Chlamydophila caviae).